The primary structure comprises 325 residues: Probable tRNA pseudouridine synthase B (325 aa).

Asp69 functions as the Nucleophile in the catalytic mechanism. The region spanning 236–311 (LPKIVIKDSA…IAADIQRVMM (76 aa)) is the PUA domain.

The protein belongs to the pseudouridine synthase TruB family. Type 2 subfamily.

It carries out the reaction uridine(55) in tRNA = pseudouridine(55) in tRNA. In terms of biological role, could be responsible for synthesis of pseudouridine from uracil-55 in the psi GC loop of transfer RNAs. The sequence is that of Probable tRNA pseudouridine synthase B from Archaeoglobus fulgidus (strain ATCC 49558 / DSM 4304 / JCM 9628 / NBRC 100126 / VC-16).